Here is a 203-residue protein sequence, read N- to C-terminus: FMN-dependent NADH:quinone oxidoreductase 3 (203 aa).

Residues serine 9, 15–17 (SAS), 95–98 (MYNF), and 139–142 (TAGG) each bind FMN.

This sequence belongs to the azoreductase type 1 family. As to quaternary structure, homodimer. Requires FMN as cofactor.

It carries out the reaction 2 a quinone + NADH + H(+) = 2 a 1,4-benzosemiquinone + NAD(+). The enzyme catalyses N,N-dimethyl-1,4-phenylenediamine + anthranilate + 2 NAD(+) = 2-(4-dimethylaminophenyl)diazenylbenzoate + 2 NADH + 2 H(+). Quinone reductase that provides resistance to thiol-specific stress caused by electrophilic quinones. In terms of biological role, also exhibits azoreductase activity. Catalyzes the reductive cleavage of the azo bond in aromatic azo compounds to the corresponding amines. The sequence is that of FMN-dependent NADH:quinone oxidoreductase 3 from Pseudomonas fluorescens (strain Pf0-1).